The chain runs to 358 residues: Alanine racemase (358 aa).

Lysine 34 functions as the Proton acceptor; specific for D-alanine in the catalytic mechanism. Position 34 is an N6-(pyridoxal phosphate)lysine (lysine 34). Arginine 129 contributes to the substrate binding site. Tyrosine 254 functions as the Proton acceptor; specific for L-alanine in the catalytic mechanism. Position 302 (methionine 302) interacts with substrate.

Belongs to the alanine racemase family. Pyridoxal 5'-phosphate serves as cofactor.

The enzyme catalyses L-alanine = D-alanine. It functions in the pathway amino-acid biosynthesis; D-alanine biosynthesis; D-alanine from L-alanine: step 1/1. In terms of biological role, catalyzes the interconversion of L-alanine and D-alanine. May also act on other amino acids. The polypeptide is Alanine racemase (alr) (Vibrio parahaemolyticus serotype O3:K6 (strain RIMD 2210633)).